An 89-amino-acid chain; its full sequence is Small ribosomal subunit protein uS15 (89 aa).

This sequence belongs to the universal ribosomal protein uS15 family. As to quaternary structure, part of the 30S ribosomal subunit. Forms a bridge to the 50S subunit in the 70S ribosome, contacting the 23S rRNA.

Its function is as follows. One of the primary rRNA binding proteins, it binds directly to 16S rRNA where it helps nucleate assembly of the platform of the 30S subunit by binding and bridging several RNA helices of the 16S rRNA. In terms of biological role, forms an intersubunit bridge (bridge B4) with the 23S rRNA of the 50S subunit in the ribosome. The protein is Small ribosomal subunit protein uS15 of Aliivibrio salmonicida (strain LFI1238) (Vibrio salmonicida (strain LFI1238)).